The primary structure comprises 227 residues: Cytidylate kinase (227 aa).

Residue 12-20 (GPSGAGKGT) participates in ATP binding.

It belongs to the cytidylate kinase family. Type 1 subfamily.

The protein resides in the cytoplasm. It catalyses the reaction CMP + ATP = CDP + ADP. The enzyme catalyses dCMP + ATP = dCDP + ADP. This chain is Cytidylate kinase, found in Photorhabdus laumondii subsp. laumondii (strain DSM 15139 / CIP 105565 / TT01) (Photorhabdus luminescens subsp. laumondii).